The chain runs to 162 residues: Putative ripening-related protein 7 (162 aa).

An N-terminal signal peptide occupies residues 1–30; it reads MAAAAASTKIVAVVVAVLLAILEMPSCAVA.

Belongs to the kiwellin family.

The protein localises to the secreted. The chain is Putative ripening-related protein 7 from Oryza sativa subsp. japonica (Rice).